Consider the following 1076-residue polypeptide: Bifunctional glutamine synthetase adenylyltransferase/adenylyl-removing enzyme (1076 aa).

The segment at 1–521 (MESSMFKPSS…LHLDIYYRPM (521 aa)) is adenylyl removase. Residues 524–1076 (VNAQMENDQI…LERNRRRAQR (553 aa)) are adenylyl transferase. The segment covering 1041-1056 (ATATASAATPQPQTAP) has biased composition (low complexity). The interval 1041-1076 (ATATASAATPQPQTAPRPRMHVIAPRLERNRRRAQR) is disordered.

This sequence belongs to the GlnE family. The cofactor is Mg(2+).

It carries out the reaction [glutamine synthetase]-O(4)-(5'-adenylyl)-L-tyrosine + phosphate = [glutamine synthetase]-L-tyrosine + ADP. The catalysed reaction is [glutamine synthetase]-L-tyrosine + ATP = [glutamine synthetase]-O(4)-(5'-adenylyl)-L-tyrosine + diphosphate. Its function is as follows. Involved in the regulation of glutamine synthetase GlnA, a key enzyme in the process to assimilate ammonia. When cellular nitrogen levels are high, the C-terminal adenylyl transferase (AT) inactivates GlnA by covalent transfer of an adenylyl group from ATP to specific tyrosine residue of GlnA, thus reducing its activity. Conversely, when nitrogen levels are low, the N-terminal adenylyl removase (AR) activates GlnA by removing the adenylyl group by phosphorolysis, increasing its activity. The regulatory region of GlnE binds the signal transduction protein PII (GlnB) which indicates the nitrogen status of the cell. This is Bifunctional glutamine synthetase adenylyltransferase/adenylyl-removing enzyme from Bifidobacterium longum subsp. infantis (strain ATCC 15697 / DSM 20088 / JCM 1222 / NCTC 11817 / S12).